The sequence spans 216 residues: Pyridoxine/pyridoxamine 5'-phosphate oxidase (216 aa).

FMN-binding positions include 64–69 (RVVLLK), 79–80 (FT), K85, K86, and Q108. K69 provides a ligand contact to substrate. Residues Y126, R130, and S134 each contribute to the substrate site. FMN contacts are provided by residues 143-144 (QS) and W188. Substrate is bound at residue 194 to 196 (RKH). An FMN-binding site is contributed by R198.

This sequence belongs to the pyridoxamine 5'-phosphate oxidase family. As to quaternary structure, homodimer. Requires FMN as cofactor.

It catalyses the reaction pyridoxamine 5'-phosphate + O2 + H2O = pyridoxal 5'-phosphate + H2O2 + NH4(+). It carries out the reaction pyridoxine 5'-phosphate + O2 = pyridoxal 5'-phosphate + H2O2. It functions in the pathway cofactor metabolism; pyridoxal 5'-phosphate salvage; pyridoxal 5'-phosphate from pyridoxamine 5'-phosphate: step 1/1. It participates in cofactor metabolism; pyridoxal 5'-phosphate salvage; pyridoxal 5'-phosphate from pyridoxine 5'-phosphate: step 1/1. In terms of biological role, catalyzes the oxidation of either pyridoxine 5'-phosphate (PNP) or pyridoxamine 5'-phosphate (PMP) into pyridoxal 5'-phosphate (PLP). This is Pyridoxine/pyridoxamine 5'-phosphate oxidase from Wolbachia pipientis wMel.